The sequence spans 289 residues: Thioredoxin-like protein 1 (289 aa).

One can recognise a Thioredoxin domain in the interval 2–109; it reads VGVKPVGSDP…EEKIKQHLEN (108 aa). A disulfide bond links Cys-34 and Cys-37. Residue Ser-113 is modified to Phosphoserine. The PITH domain occupies 115-285; that stretch reads EDTDIPKGYM…NDFKRVVGKK (171 aa).

Component of the 19S regulatory cap of the 26S proteasome. Interacts with PSMD14/RPN11. Interacts with, and reduces EEF1A1.

It is found in the cytoplasm. The protein resides in the nucleus. Functionally, active thioredoxin with a redox potential of about -250 mV. The chain is Thioredoxin-like protein 1 (Txnl1) from Rattus norvegicus (Rat).